A 732-amino-acid chain; its full sequence is Elongation factor 2 (732 aa).

The tr-type G domain occupies 19 to 230 (ERIRNMGIAA…VSFKDIIDLT (212 aa)). GTP-binding positions include 28 to 35 (AHIDHGKT), 94 to 98 (DTPGH), and 148 to 151 (NKVD). His597 carries the diphthamide modification.

It belongs to the TRAFAC class translation factor GTPase superfamily. Classic translation factor GTPase family. EF-G/EF-2 subfamily.

Its subcellular location is the cytoplasm. Its function is as follows. Catalyzes the GTP-dependent ribosomal translocation step during translation elongation. During this step, the ribosome changes from the pre-translocational (PRE) to the post-translocational (POST) state as the newly formed A-site-bound peptidyl-tRNA and P-site-bound deacylated tRNA move to the P and E sites, respectively. Catalyzes the coordinated movement of the two tRNA molecules, the mRNA and conformational changes in the ribosome. In Thermococcus sibiricus (strain DSM 12597 / MM 739), this protein is Elongation factor 2.